Here is a 218-residue protein sequence, read N- to C-terminus: MDETLRKRLESARLYLCTDARADRGDLAEFLDAALAGGVDIVQLRDKTLDARDELAALEVVREACDRHGALLAVNDRADIAHAVNADVLHLGQRDLPVRYARAILGDRPLIGRSTNAAELSAAADREEGVDYFCIGPVWATPTKPGRPAAGLDEVARVAALHPQRPWFAIGGINEDNLDQVLAAGARRAVVVRAITEAEDPRAAAAELKRRLVAAAAA.

4-amino-2-methyl-5-(diphosphooxymethyl)pyrimidine contacts are provided by residues 43 to 47 (QLRDK) and N75. Mg(2+) is bound by residues D76 and D95. 4-amino-2-methyl-5-(diphosphooxymethyl)pyrimidine is bound at residue S114. 2-[(2R,5Z)-2-carboxy-4-methylthiazol-5(2H)-ylidene]ethyl phosphate is bound at residue 141-143 (TPT). K144 is a 4-amino-2-methyl-5-(diphosphooxymethyl)pyrimidine binding site. G172 provides a ligand contact to 2-[(2R,5Z)-2-carboxy-4-methylthiazol-5(2H)-ylidene]ethyl phosphate.

Belongs to the thiamine-phosphate synthase family. It depends on Mg(2+) as a cofactor.

The enzyme catalyses 2-[(2R,5Z)-2-carboxy-4-methylthiazol-5(2H)-ylidene]ethyl phosphate + 4-amino-2-methyl-5-(diphosphooxymethyl)pyrimidine + 2 H(+) = thiamine phosphate + CO2 + diphosphate. It catalyses the reaction 2-(2-carboxy-4-methylthiazol-5-yl)ethyl phosphate + 4-amino-2-methyl-5-(diphosphooxymethyl)pyrimidine + 2 H(+) = thiamine phosphate + CO2 + diphosphate. It carries out the reaction 4-methyl-5-(2-phosphooxyethyl)-thiazole + 4-amino-2-methyl-5-(diphosphooxymethyl)pyrimidine + H(+) = thiamine phosphate + diphosphate. It participates in cofactor biosynthesis; thiamine diphosphate biosynthesis; thiamine phosphate from 4-amino-2-methyl-5-diphosphomethylpyrimidine and 4-methyl-5-(2-phosphoethyl)-thiazole: step 1/1. In terms of biological role, condenses 4-methyl-5-(beta-hydroxyethyl)thiazole monophosphate (THZ-P) and 2-methyl-4-amino-5-hydroxymethyl pyrimidine pyrophosphate (HMP-PP) to form thiamine monophosphate (TMP). The protein is Thiamine-phosphate synthase of Thermobifida fusca (strain YX).